The sequence spans 77 residues: Small ribosomal subunit protein bS21 (77 aa).

The span at 38 to 52 (KPSEKRAREKAEAIR) shows a compositional bias: basic and acidic residues. The segment at 38–77 (KPSEKRAREKAEAIRRTRKLARKRAQREGIVSNGRTASVR) is disordered. The span at 53 to 62 (RTRKLARKRA) shows a compositional bias: basic residues.

Belongs to the bacterial ribosomal protein bS21 family.

The chain is Small ribosomal subunit protein bS21 from Bartonella bacilliformis (strain ATCC 35685 / KC583 / Herrer 020/F12,63).